The sequence spans 100 residues: Urease subunit gamma (100 aa).

This sequence belongs to the urease gamma subunit family. In terms of assembly, heterotrimer of UreA (gamma), UreB (beta) and UreC (alpha) subunits. Three heterotrimers associate to form the active enzyme.

Its subcellular location is the cytoplasm. The catalysed reaction is urea + 2 H2O + H(+) = hydrogencarbonate + 2 NH4(+). It participates in nitrogen metabolism; urea degradation; CO(2) and NH(3) from urea (urease route): step 1/1. In Pseudomonas aeruginosa (strain LESB58), this protein is Urease subunit gamma.